The sequence spans 680 residues: Epithelial splicing regulatory protein 1 (680 aa).

RRM domains are found at residues 224–301, 325–405, and 444–524; these read TVVR…KATG, VIVR…RSTA, and DCIR…QCSA. S542 is modified (phosphoserine). Residue R581 is modified to Omega-N-methylarginine.

The protein belongs to the ESRP family. As to expression, epithelial cell-specific. Epithelial-specific expression in diverse tissues and organs with particularly notable levels of expression in skin and gastrointestinal epithelia.

The protein resides in the nucleus. MRNA splicing factor that regulates the formation of epithelial cell-specific isoforms. Specifically regulates the expression of FGFR2-IIIb, an epithelial cell-specific isoform of FGFR2. Also regulates the splicing of CD44, CTNND1, ENAH, 3 transcripts that undergo changes in splicing during the epithelial-to-mesenchymal transition (EMT). Acts by directly binding specific sequences in mRNAs. Binds the GU-rich sequence motifs in the ISE/ISS-3, a cis-element regulatory region present in the mRNA of FGFR2. Regulates splicing and expression of genes involved in inner ear development, auditory hair cell differentiation, and cell fate specification in the cochlear epithelium. The chain is Epithelial splicing regulatory protein 1 (Esrp1) from Mus musculus (Mouse).